Here is a 290-residue protein sequence, read N- to C-terminus: Virginiamycin B lyase (290 aa).

His226 serves as a coordination point for substrate. Glu265 serves as a coordination point for Mg(2+). The Proton acceptor role is filled by His267. A Mg(2+)-binding site is contributed by Glu282.

Belongs to the Vgb family. Monomer. Mg(2+) serves as cofactor.

Inactivates the type B streptogramin antibiotics by linearizing the lactone ring at the ester linkage, generating a free phenylglycine carboxylate and converting the threonyl moiety into 2-amino-butenoic acid. This chain is Virginiamycin B lyase, found in Mycolicibacterium vanbaalenii (strain DSM 7251 / JCM 13017 / BCRC 16820 / KCTC 9966 / NRRL B-24157 / PYR-1) (Mycobacterium vanbaalenii).